The following is a 287-amino-acid chain: Phosphatidylglycerol--prolipoprotein diacylglyceryl transferase (287 aa).

4 helical membrane passes run 15–35 (IGPL…ILAI), 55–75 (FVMF…VFFE), 90–110 (IWEG…TAIV), and 117–137 (VSFW…QAIG). Arginine 138 is an a 1,2-diacyl-sn-glycero-3-phospho-(1'-sn-glycerol) binding site. The next 2 membrane-spanning stretches (helical) occupy residues 180–200 (HPTF…LLLL) and 238–258 (IIRT…IFII).

It belongs to the Lgt family.

The protein resides in the cell membrane. The enzyme catalyses L-cysteinyl-[prolipoprotein] + a 1,2-diacyl-sn-glycero-3-phospho-(1'-sn-glycerol) = an S-1,2-diacyl-sn-glyceryl-L-cysteinyl-[prolipoprotein] + sn-glycerol 1-phosphate + H(+). The protein operates within protein modification; lipoprotein biosynthesis (diacylglyceryl transfer). Catalyzes the transfer of the diacylglyceryl group from phosphatidylglycerol to the sulfhydryl group of the N-terminal cysteine of a prolipoprotein, the first step in the formation of mature lipoproteins. This Oceanobacillus iheyensis (strain DSM 14371 / CIP 107618 / JCM 11309 / KCTC 3954 / HTE831) protein is Phosphatidylglycerol--prolipoprotein diacylglyceryl transferase.